Here is a 292-residue protein sequence, read N- to C-terminus: 33 kDa chaperonin (292 aa).

Disulfide bonds link Cys237/Cys239 and Cys270/Cys273.

It belongs to the HSP33 family. Post-translationally, under oxidizing conditions two disulfide bonds are formed involving the reactive cysteines. Under reducing conditions zinc is bound to the reactive cysteines and the protein is inactive.

It localises to the cytoplasm. In terms of biological role, redox regulated molecular chaperone. Protects both thermally unfolding and oxidatively damaged proteins from irreversible aggregation. Plays an important role in the bacterial defense system toward oxidative stress. The protein is 33 kDa chaperonin of Lachnoclostridium phytofermentans (strain ATCC 700394 / DSM 18823 / ISDg) (Clostridium phytofermentans).